The sequence spans 351 residues: Uroporphyrinogen decarboxylase (351 aa).

Residues arginine 26 to arginine 30, aspartate 76, tyrosine 153, serine 208, and histidine 323 each bind substrate.

It belongs to the uroporphyrinogen decarboxylase family. As to quaternary structure, homodimer.

Its subcellular location is the cytoplasm. The enzyme catalyses uroporphyrinogen III + 4 H(+) = coproporphyrinogen III + 4 CO2. It functions in the pathway porphyrin-containing compound metabolism; protoporphyrin-IX biosynthesis; coproporphyrinogen-III from 5-aminolevulinate: step 4/4. In terms of biological role, catalyzes the decarboxylation of four acetate groups of uroporphyrinogen-III to yield coproporphyrinogen-III. This Prochlorococcus marinus (strain MIT 9211) protein is Uroporphyrinogen decarboxylase.